The primary structure comprises 244 residues: Large ribosomal subunit protein uL2 (244 aa).

Residues Met-1–Arg-12 show a composition bias toward basic residues. Disordered stretches follow at residues Met-1–Gly-26 and Ala-193–Phe-225.

This sequence belongs to the universal ribosomal protein uL2 family. As to quaternary structure, part of the 50S ribosomal subunit. Forms a bridge to the 30S subunit in the 70S ribosome.

Its function is as follows. One of the primary rRNA binding proteins. Required for association of the 30S and 50S subunits to form the 70S ribosome, for tRNA binding and peptide bond formation. It has been suggested to have peptidyltransferase activity; this is somewhat controversial. Makes several contacts with the 16S rRNA in the 70S ribosome. This chain is Large ribosomal subunit protein uL2, found in Pyrobaculum calidifontis (strain DSM 21063 / JCM 11548 / VA1).